The chain runs to 64 residues: Large ribosomal subunit protein bL32 (64 aa).

Residues 1-20 form a disordered region; sequence MALPKYKTSRANTHSRRANW.

Belongs to the bacterial ribosomal protein bL32 family.

This Bifidobacterium adolescentis (strain ATCC 15703 / DSM 20083 / NCTC 11814 / E194a) protein is Large ribosomal subunit protein bL32.